A 162-amino-acid polypeptide reads, in one-letter code: Ribonuclease P protein component (162 aa).

The tract at residues 1–67 (MDEKDLAAQP…GGKLVSLKGD (67 aa)) is disordered. Over residues 21 to 31 (GPHEDPRRQEG) the composition is skewed to basic and acidic residues.

It belongs to the RnpA family. In terms of assembly, consists of a catalytic RNA component (M1 or rnpB) and a protein subunit.

It catalyses the reaction Endonucleolytic cleavage of RNA, removing 5'-extranucleotides from tRNA precursor.. In terms of biological role, RNaseP catalyzes the removal of the 5'-leader sequence from pre-tRNA to produce the mature 5'-terminus. It can also cleave other RNA substrates such as 4.5S RNA. The protein component plays an auxiliary but essential role in vivo by binding to the 5'-leader sequence and broadening the substrate specificity of the ribozyme. The polypeptide is Ribonuclease P protein component (Thermus brockianus).